A 271-amino-acid chain; its full sequence is Phosphatidylglycerol--prolipoprotein diacylglyceryl transferase (271 aa).

Helical transmembrane passes span 25 to 45 (WYGI…KFFV), 60 to 80 (YFIW…ILIY), 103 to 123 (FVGI…IATL), 134 to 154 (WIFL…GRIG), 181 to 201 (PSQL…VYLA), 209 to 229 (GELI…CEFY), and 235 to 255 (GIGF…IMFI). A 1,2-diacyl-sn-glycero-3-phospho-(1'-sn-glycerol) is bound at residue arginine 152.

This sequence belongs to the Lgt family.

The protein resides in the cell inner membrane. It carries out the reaction L-cysteinyl-[prolipoprotein] + a 1,2-diacyl-sn-glycero-3-phospho-(1'-sn-glycerol) = an S-1,2-diacyl-sn-glyceryl-L-cysteinyl-[prolipoprotein] + sn-glycerol 1-phosphate + H(+). It participates in protein modification; lipoprotein biosynthesis (diacylglyceryl transfer). Functionally, catalyzes the transfer of the diacylglyceryl group from phosphatidylglycerol to the sulfhydryl group of the N-terminal cysteine of a prolipoprotein, the first step in the formation of mature lipoproteins. This Campylobacter jejuni subsp. jejuni serotype O:23/36 (strain 81-176) protein is Phosphatidylglycerol--prolipoprotein diacylglyceryl transferase.